A 130-amino-acid polypeptide reads, in one-letter code: Small ribosomal subunit protein uS9 (130 aa).

This sequence belongs to the universal ribosomal protein uS9 family.

This chain is Small ribosomal subunit protein uS9, found in Polaromonas naphthalenivorans (strain CJ2).